Here is a 132-residue protein sequence, read N- to C-terminus: Cytochrome B5 isoform C (132 aa).

One can recognise a Cytochrome b5 heme-binding domain in the interval 2 to 78 (ANLISFHDVA…MKKYCIGDVD (77 aa)). Positions 37 and 61 each coordinate heme. The helical transmembrane segment at 110–129 (LLIYLIPLLILGVAFALRFY) threads the bilayer.

Belongs to the cytochrome b5 family. Interacts with CER1, BI-1, FAH1 and FAH2.

The protein localises to the endoplasmic reticulum membrane. Its function is as follows. Membrane bound hemoprotein which function as an electron carrier for several membrane bound oxygenases, including fatty acid desaturases. This Arabidopsis thaliana (Mouse-ear cress) protein is Cytochrome B5 isoform C.